The sequence spans 264 residues: 3-methyl-2-oxobutanoate hydroxymethyltransferase (264 aa).

Positions 45 and 84 each coordinate Mg(2+). Residues 45–46 (DS), Asp84, and Lys112 each bind 3-methyl-2-oxobutanoate. A Mg(2+)-binding site is contributed by Glu114. The Proton acceptor role is filled by Glu181.

It belongs to the PanB family. In terms of assembly, homodecamer; pentamer of dimers. The cofactor is Mg(2+).

The protein localises to the cytoplasm. The catalysed reaction is 3-methyl-2-oxobutanoate + (6R)-5,10-methylene-5,6,7,8-tetrahydrofolate + H2O = 2-dehydropantoate + (6S)-5,6,7,8-tetrahydrofolate. The protein operates within cofactor biosynthesis; (R)-pantothenate biosynthesis; (R)-pantoate from 3-methyl-2-oxobutanoate: step 1/2. Catalyzes the reversible reaction in which hydroxymethyl group from 5,10-methylenetetrahydrofolate is transferred onto alpha-ketoisovalerate to form ketopantoate. The sequence is that of 3-methyl-2-oxobutanoate hydroxymethyltransferase from Shewanella denitrificans (strain OS217 / ATCC BAA-1090 / DSM 15013).